A 373-amino-acid chain; its full sequence is Cobalt-precorrin-5B C(1)-methyltransferase (373 aa).

This sequence belongs to the CbiD family.

The catalysed reaction is Co-precorrin-5B + S-adenosyl-L-methionine = Co-precorrin-6A + S-adenosyl-L-homocysteine. Its pathway is cofactor biosynthesis; adenosylcobalamin biosynthesis; cob(II)yrinate a,c-diamide from sirohydrochlorin (anaerobic route): step 6/10. Catalyzes the methylation of C-1 in cobalt-precorrin-5B to form cobalt-precorrin-6A. The sequence is that of Cobalt-precorrin-5B C(1)-methyltransferase from Halorhodospira halophila (strain DSM 244 / SL1) (Ectothiorhodospira halophila (strain DSM 244 / SL1)).